The primary structure comprises 757 residues: Relaxin receptor 1 (757 aa).

The Extracellular portion of the chain corresponds to 1 to 409 (MTSGSVFFYI…ENLLASIIQR (409 aa)). The LDL-receptor class A domain occupies 26 to 63 (KCSLGYFPCGNITKCLPQLLHCNGVDDCGNQADEDNCG). Intrachain disulfides connect cysteine 27–cysteine 40, cysteine 34–cysteine 53, and cysteine 47–cysteine 62. Asparagine 36 carries N-linked (GlcNAc...) asparagine glycosylation. Residues leucine 45, asparagine 48, valine 50, aspartate 52, aspartate 58, and glutamate 59 each coordinate Ca(2+). One can recognise an LRRNT domain in the interval 91–127 (ETPECLVGSVPVQCLCQGLELDCDETNLRAVPSVSSN). Residue asparagine 127 is glycosylated (N-linked (GlcNAc...) asparagine). 9 LRR repeats span residues 151 to 172 (DLQK…AFRG), 175 to 196 (SLTK…VFED), 199 to 220 (RLEW…TFYG), 223 to 244 (SLIL…PLCQ), 248 to 269 (RLHW…TFIS), 272 to 293 (NLTV…TFAP), 296 to 317 (KLDE…IFKD), 320 to 341 (ELSQ…QFDY), and 344 to 365 (KLKS…MFRP). 2 N-linked (GlcNAc...) asparagine glycosylation sites follow: asparagine 264 and asparagine 272. N-linked (GlcNAc...) asparagine glycosylation is present at asparagine 325. Asparagine 368 is a glycosylation site (N-linked (GlcNAc...) asparagine). The helical transmembrane segment at 410–430 (VFVWVVSAVTCFGNIFVICMR) threads the bilayer. Over 431 to 443 (PYIRSENKLYAMS) the chain is Cytoplasmic. The helical transmembrane segment at 444-464 (IISLCCADCLMGIYLFVIGGF) threads the bilayer. Residues 465–486 (DLKFRGEYNKHAQLWMESTHCQ) lie on the Extracellular side of the membrane. Cysteine 485 and cysteine 563 are oxidised to a cystine. The chain crosses the membrane as a helical span at residues 487–507 (LVGSLAILSTEVSVLLLTFLT). Topologically, residues 508 to 527 (LEKYICIVYPFRCVRPGKCR) are cytoplasmic. Residues 528–548 (TITVLILIWITGFIVAFIPLS) traverse the membrane as a helical segment. The Extracellular portion of the chain corresponds to 549–577 (NKEFFKNYYGTNGVCFPLHSEDTESIGAQ). Residues 578 to 598 (IYSVAIFLGINLAAFIIIVFS) form a helical membrane-spanning segment. Over 599–629 (YGSMFYSVHQSAITATEIRNQVKKEMILAKR) the chain is Cytoplasmic. A helical transmembrane segment spans residues 630 to 650 (FFFIVFTDALCWIPIFVVKFL). Residue serine 651 is a topological domain, extracellular. The chain crosses the membrane as a helical span at residues 652–672 (LLQVEIPGTITSWVVIFILPI). Residues 673–757 (NSALNPILYT…SQSTRLNSYS (85 aa)) lie on the Cytoplasmic side of the membrane.

The protein belongs to the G-protein coupled receptor 1 family. As to quaternary structure, interacts with C1QTNF8. Expressed in the brain, kidney, testis, placenta, uterus, ovary, adrenal, prostate, skin and heart. Not detected in spleen.

It is found in the cell membrane. Receptor for relaxins. The activity of this receptor is mediated by G proteins leading to stimulation of adenylate cyclase and an increase of cAMP. Binding of the ligand may also activate a tyrosine kinase pathway that inhibits the activity of a phosphodiesterase that degrades cAMP. The protein is Relaxin receptor 1 (RXFP1) of Homo sapiens (Human).